Reading from the N-terminus, the 187-residue chain is Large ribosomal subunit protein uL5 (187 aa).

It belongs to the universal ribosomal protein uL5 family. Part of the 50S ribosomal subunit; part of the 5S rRNA/L5/L18/L25 subcomplex. Contacts the 5S rRNA and the P site tRNA. Forms a bridge to the 30S subunit in the 70S ribosome.

In terms of biological role, this is one of the proteins that bind and probably mediate the attachment of the 5S RNA into the large ribosomal subunit, where it forms part of the central protuberance. In the 70S ribosome it contacts protein S13 of the 30S subunit (bridge B1b), connecting the 2 subunits; this bridge is implicated in subunit movement. Contacts the P site tRNA; the 5S rRNA and some of its associated proteins might help stabilize positioning of ribosome-bound tRNAs. This Roseobacter denitrificans (strain ATCC 33942 / OCh 114) (Erythrobacter sp. (strain OCh 114)) protein is Large ribosomal subunit protein uL5.